Here is a 354-residue protein sequence, read N- to C-terminus: NADPH dehydrogenase (354 aa).

FMN is bound by residues Ser23, Pro24, Cys26, Ala58, and Gln100. Tyr182 acts as the Proton donor in catalysis. FMN is bound by residues Arg230, Leu301, Gly323, and Arg324.

This sequence belongs to the NADH:flavin oxidoreductase/NADH oxidase family. NamA subfamily. As to quaternary structure, homodimer. Behaves as an active monomer in solution while in the crystal packing assembles following the classical dimeric architecture of other thermophilic-like ene-reductases. FMN serves as cofactor.

The enzyme catalyses A + NADPH + H(+) = AH2 + NADP(+). Its function is as follows. Ene-reductase that catalyzes the stereoselective reduction of activated C-C double bonds. Shows very good activity with 4-ketoisophorone, 2-cyclohexen-1-one and 1-octen-3-one, and low activity with maleimide, 2-methyl-pentenal, 2-methyl-cyclohexen-1-one, 2-cyclopenten-1-one and trans-2-hexen-1-al. Shows the highest catalytic efficiency with ketoisophorone. Exhibits a restricted substrate spectrum with generally lower activities compared to other ene-reductases. This is NADPH dehydrogenase from Chloroflexus aggregans (strain MD-66 / DSM 9485).